The following is an 82-amino-acid chain: Small ribosomal subunit protein bS18 (82 aa).

Residues 1 to 21 are disordered; it reads MKRNNSKKVRVEPTRRPKKNP.

This sequence belongs to the bacterial ribosomal protein bS18 family. Part of the 30S ribosomal subunit. Forms a tight heterodimer with protein bS6.

In terms of biological role, binds as a heterodimer with protein bS6 to the central domain of the 16S rRNA, where it helps stabilize the platform of the 30S subunit. This chain is Small ribosomal subunit protein bS18, found in Corynebacterium kroppenstedtii (strain DSM 44385 / JCM 11950 / CIP 105744 / CCUG 35717).